The following is a 303-amino-acid chain: Protoheme IX farnesyltransferase (303 aa).

The next 9 helical transmembrane spans lie at 17 to 37 (GVVM…TEPA), 42 to 62 (LATF…SAAI), 91 to 111 (AAIT…YFLV), 114 to 134 (LTAW…TLYL), 142 to 162 (IVIG…AVTG), 168 to 188 (AWLL…ALAI), 208 to 228 (IPFT…CTLL), 231 to 251 (LTGM…LVFL), and 270 to 290 (FGYS…DHYL).

This sequence belongs to the UbiA prenyltransferase family. Protoheme IX farnesyltransferase subfamily.

Its subcellular location is the cell inner membrane. The catalysed reaction is heme b + (2E,6E)-farnesyl diphosphate + H2O = Fe(II)-heme o + diphosphate. The protein operates within porphyrin-containing compound metabolism; heme O biosynthesis; heme O from protoheme: step 1/1. In terms of biological role, converts heme B (protoheme IX) to heme O by substitution of the vinyl group on carbon 2 of heme B porphyrin ring with a hydroxyethyl farnesyl side group. In Alcanivorax borkumensis (strain ATCC 700651 / DSM 11573 / NCIMB 13689 / SK2), this protein is Protoheme IX farnesyltransferase.